A 442-amino-acid polypeptide reads, in one-letter code: Probable carboxypeptidase PABG_01461 (442 aa).

The N-terminal stretch at 1–20 (MKLQYLVALLSVQAVPPVTA) is a signal peptide. N-linked (GlcNAc...) asparagine glycosylation occurs at asparagine 102. Position 160 (aspartate 160) interacts with Zn(2+). Glutamate 192 acts as the Proton acceptor in catalysis. Glutamate 193 serves as a coordination point for Zn(2+). An N-linked (GlcNAc...) asparagine glycan is attached at asparagine 343.

This sequence belongs to the peptidase M20A family. Requires Zn(2+) as cofactor.

Its subcellular location is the secreted. This chain is Probable carboxypeptidase PABG_01461, found in Paracoccidioides brasiliensis (strain Pb03).